The primary structure comprises 565 residues: NAD-dependent malic enzyme (565 aa).

The Proton donor role is filled by Tyr-104. Arg-157 is a binding site for NAD(+). Lys-175 acts as the Proton acceptor in catalysis. Residues Glu-246, Asp-247, and Asp-270 each contribute to the a divalent metal cation site. NAD(+) is bound by residues Asp-270 and Asn-418.

The protein belongs to the malic enzymes family. In terms of assembly, homotetramer. Mg(2+) is required as a cofactor. It depends on Mn(2+) as a cofactor.

It carries out the reaction (S)-malate + NAD(+) = pyruvate + CO2 + NADH. The enzyme catalyses oxaloacetate + H(+) = pyruvate + CO2. This is NAD-dependent malic enzyme from Escherichia coli (strain K12 / MC4100 / BW2952).